A 436-amino-acid chain; its full sequence is UDP-N-acetylglucosamine 1-carboxyvinyltransferase 1 (436 aa).

Position 22–23 (22–23 (KN)) interacts with phosphoenolpyruvate. Position 93 (Arg93) interacts with UDP-N-acetyl-alpha-D-glucosamine. Cys117 (proton donor) is an active-site residue. Residue Cys117 is modified to 2-(S-cysteinyl)pyruvic acid O-phosphothioketal. UDP-N-acetyl-alpha-D-glucosamine is bound by residues 122 to 126 (RPIDQ), Asp306, and Val328.

It belongs to the EPSP synthase family. MurA subfamily.

The protein resides in the cytoplasm. The catalysed reaction is phosphoenolpyruvate + UDP-N-acetyl-alpha-D-glucosamine = UDP-N-acetyl-3-O-(1-carboxyvinyl)-alpha-D-glucosamine + phosphate. Its pathway is cell wall biogenesis; peptidoglycan biosynthesis. Its function is as follows. Cell wall formation. Adds enolpyruvyl to UDP-N-acetylglucosamine. The chain is UDP-N-acetylglucosamine 1-carboxyvinyltransferase 1 from Bacillus licheniformis (strain ATCC 14580 / DSM 13 / JCM 2505 / CCUG 7422 / NBRC 12200 / NCIMB 9375 / NCTC 10341 / NRRL NRS-1264 / Gibson 46).